A 1915-amino-acid polypeptide reads, in one-letter code: Protein TIC 214 (1915 aa).

6 consecutive transmembrane segments (helical) span residues 18–38, 64–84, 90–110, 126–146, 174–194, and 230–250; these read IINS…FSIG, FITG…HLAL, ITVL…HKYF, LNIQ…HFIL, VGWL…LIWI, and IFSI…PSTL. Disordered regions lie at residues 260-319 and 1566-1631; these read KMKQ…EIRV and NKNI…GSVL. The segment covering 267–277 has biased composition (acidic residues); it reads SEEETDVEIET. Residues 279 to 288 are compositionally biased toward basic and acidic residues; the sequence is SETKETKEEQ. A compositionally biased stretch (acidic residues) spans 304–315; the sequence is EKEDPDKIDETE. Basic and acidic residues predominate over residues 1587–1601; sequence KSLELENRNQEEKES. Residues 1602–1631 are compositionally biased toward polar residues; sequence SSQGDLGSNAQNQGNLGPNAQNQGNLGSVL.

This sequence belongs to the TIC214 family. Part of the Tic complex.

The protein resides in the plastid. It is found in the chloroplast inner membrane. In terms of biological role, involved in protein precursor import into chloroplasts. May be part of an intermediate translocation complex acting as a protein-conducting channel at the inner envelope. In Platanus occidentalis (Sycamore), this protein is Protein TIC 214.